The sequence spans 372 residues: Trihelix transcription factor GT-4 (372 aa).

One can recognise a Myb-like domain in the interval Ala-47–Leu-111. Ser-167 carries the phosphoserine modification.

It is found in the nucleus. Its function is as follows. Probable transcription factor that binds specific DNA sequence. The polypeptide is Trihelix transcription factor GT-4 (GT-4) (Arabidopsis thaliana (Mouse-ear cress)).